A 126-amino-acid chain; its full sequence is Prefoldin subunit beta (126 aa).

It belongs to the prefoldin subunit beta family. Heterohexamer of two alpha and four beta subunits.

The protein resides in the cytoplasm. In terms of biological role, molecular chaperone capable of stabilizing a range of proteins. Seems to fulfill an ATP-independent, HSP70-like function in archaeal de novo protein folding. In Saccharolobus islandicus (strain Y.N.15.51 / Yellowstone #2) (Sulfolobus islandicus), this protein is Prefoldin subunit beta.